Here is a 178-residue protein sequence, read N- to C-terminus: Crossover junction endodeoxyribonuclease RuvC (178 aa).

Residues Asp7, Glu68, and Asp141 contribute to the active site. Asp7, Glu68, and Asp141 together coordinate Mg(2+).

It belongs to the RuvC family. Homodimer which binds Holliday junction (HJ) DNA. The HJ becomes 2-fold symmetrical on binding to RuvC with unstacked arms; it has a different conformation from HJ DNA in complex with RuvA. In the full resolvosome a probable DNA-RuvA(4)-RuvB(12)-RuvC(2) complex forms which resolves the HJ. Requires Mg(2+) as cofactor.

It localises to the cytoplasm. It catalyses the reaction Endonucleolytic cleavage at a junction such as a reciprocal single-stranded crossover between two homologous DNA duplexes (Holliday junction).. Its function is as follows. The RuvA-RuvB-RuvC complex processes Holliday junction (HJ) DNA during genetic recombination and DNA repair. Endonuclease that resolves HJ intermediates. Cleaves cruciform DNA by making single-stranded nicks across the HJ at symmetrical positions within the homologous arms, yielding a 5'-phosphate and a 3'-hydroxyl group; requires a central core of homology in the junction. The consensus cleavage sequence is 5'-(A/T)TT(C/G)-3'. Cleavage occurs on the 3'-side of the TT dinucleotide at the point of strand exchange. HJ branch migration catalyzed by RuvA-RuvB allows RuvC to scan DNA until it finds its consensus sequence, where it cleaves and resolves the cruciform DNA. The sequence is that of Crossover junction endodeoxyribonuclease RuvC from Parafrankia sp. (strain EAN1pec).